Here is a 353-residue protein sequence, read N- to C-terminus: S-adenosylmethionine:tRNA ribosyltransferase-isomerase (353 aa).

The protein belongs to the QueA family. In terms of assembly, monomer.

It is found in the cytoplasm. It carries out the reaction 7-aminomethyl-7-carbaguanosine(34) in tRNA + S-adenosyl-L-methionine = epoxyqueuosine(34) in tRNA + adenine + L-methionine + 2 H(+). Its pathway is tRNA modification; tRNA-queuosine biosynthesis. In terms of biological role, transfers and isomerizes the ribose moiety from AdoMet to the 7-aminomethyl group of 7-deazaguanine (preQ1-tRNA) to give epoxyqueuosine (oQ-tRNA). The polypeptide is S-adenosylmethionine:tRNA ribosyltransferase-isomerase (Marinomonas sp. (strain MWYL1)).